Here is a 373-residue protein sequence, read N- to C-terminus: Eukaryotic translation initiation factor 3 subunit M (373 aa).

Ser2 is modified (N-acetylserine). Phosphoserine occurs at positions 2 and 152. One can recognise a PCI domain in the interval 180-338 (AASKVMVELL…RKVVVSHSTH (159 aa)). At Lys253 the chain carries N6-acetyllysine. A Phosphoserine modification is found at Ser366.

Belongs to the eIF-3 subunit M family. In terms of assembly, component of the eukaryotic translation initiation factor 3 (eIF-3) complex, which is composed of 13 subunits: EIF3A, EIF3B, EIF3C, EIF3D, EIF3E, EIF3F, EIF3G, EIF3H, EIF3I, EIF3J, EIF3K, EIF3L and EIF3M. The eIF-3 complex appears to include 3 stable modules: module A is composed of EIF3A, EIF3B, EIF3G and EIF3I; module B is composed of EIF3F, EIF3H, and EIF3M; and module C is composed of EIF3C, EIF3D, EIF3E, EIF3K and EIF3L. EIF3C of module C binds EIF3B of module A and EIF3H of module B, thereby linking the three modules. EIF3J is a labile subunit that binds to the eIF-3 complex via EIF3B. The eIF-3 complex interacts with RPS6KB1 under conditions of nutrient depletion. Mitogenic stimulation leads to binding and activation of a complex composed of MTOR and RPTOR, leading to phosphorylation and release of RPS6KB1 and binding of EIF4B to eIF-3.

It localises to the cytoplasm. In terms of biological role, component of the eukaryotic translation initiation factor 3 (eIF-3) complex, which is required for several steps in the initiation of protein synthesis. The eIF-3 complex associates with the 40S ribosome and facilitates the recruitment of eIF-1, eIF-1A, eIF-2:GTP:methionyl-tRNAi and eIF-5 to form the 43S pre-initiation complex (43S PIC). The eIF-3 complex stimulates mRNA recruitment to the 43S PIC and scanning of the mRNA for AUG recognition. The eIF-3 complex is also required for disassembly and recycling of post-termination ribosomal complexes and subsequently prevents premature joining of the 40S and 60S ribosomal subunits prior to initiation. The eIF-3 complex specifically targets and initiates translation of a subset of mRNAs involved in cell proliferation, including cell cycling, differentiation and apoptosis, and uses different modes of RNA stem-loop binding to exert either translational activation or repression. The protein is Eukaryotic translation initiation factor 3 subunit M of Bos taurus (Bovine).